A 355-amino-acid chain; its full sequence is Heat-inducible transcription repressor HrcA (355 aa).

The protein belongs to the HrcA family.

In terms of biological role, negative regulator of class I heat shock genes (grpE-dnaK-dnaJ and groELS operons). Prevents heat-shock induction of these operons. The sequence is that of Heat-inducible transcription repressor HrcA from Prosthecochloris aestuarii (strain DSM 271 / SK 413).